The sequence spans 336 residues: Fructose-1,6-bisphosphatase class 1 (336 aa).

4 residues coordinate Mg(2+): Glu-92, Asp-115, Leu-117, and Asp-118. Substrate contacts are provided by residues 118 to 121, Asn-211, Tyr-244, 262 to 264, and Lys-274; these read DGSS and YLY. Glu-280 contributes to the Mg(2+) binding site.

Belongs to the FBPase class 1 family. In terms of assembly, homotetramer. Mg(2+) is required as a cofactor.

It is found in the cytoplasm. It catalyses the reaction beta-D-fructose 1,6-bisphosphate + H2O = beta-D-fructose 6-phosphate + phosphate. It participates in carbohydrate biosynthesis; gluconeogenesis. In Vibrio cholerae serotype O1 (strain ATCC 39315 / El Tor Inaba N16961), this protein is Fructose-1,6-bisphosphatase class 1.